Reading from the N-terminus, the 546-residue chain is Chaperonin GroEL 1 (546 aa).

ATP-binding positions include 29–32, 86–90, G414, and D499; these read TLGP and DGTTT.

The protein belongs to the chaperonin (HSP60) family. As to quaternary structure, forms a cylinder of 14 subunits composed of two heptameric rings stacked back-to-back. Interacts with the co-chaperonin GroES.

Its subcellular location is the cytoplasm. It catalyses the reaction ATP + H2O + a folded polypeptide = ADP + phosphate + an unfolded polypeptide.. Together with its co-chaperonin GroES, plays an essential role in assisting protein folding. The GroEL-GroES system forms a nano-cage that allows encapsulation of the non-native substrate proteins and provides a physical environment optimized to promote and accelerate protein folding. This chain is Chaperonin GroEL 1, found in Roseiflexus sp. (strain RS-1).